Consider the following 268-residue polypeptide: Ethylene-responsive transcription factor ERN1 (268 aa).

Polar residues predominate over residues 1–21; it reads MEIQFQQPNMQNQKAGISVTN. A disordered region spans residues 1-36; it reads MEIQFQQPNMQNQKAGISVTNKGGKFKGRNRNSNNT. The segment at residues 38 to 95 is a DNA-binding region (AP2/ERF); that stretch reads KFVGVRQRPSGRWVAEIKDTTQKIRMWLGTFETAEEAARAYDEAACLLRGSNTRTNFI. The disordered stretch occupies residues 114-154; the sequence is NRKGDKKQEDGAVASAPSNSKTTISNTSTITSNDDNKESTL. Over residues 131-146 the composition is skewed to low complexity; sequence SNSKTTISNTSTITSN.

Belongs to the AP2/ERF transcription factor family. ERF subfamily. In terms of tissue distribution, expressed in roots, root hairs and leaves. Expressed in root epidermis and root hairs.

Its subcellular location is the nucleus. Transcription factor involved in symbiotic nodule signaling in response to rhizobial Nod factors (NFs). Binds to the GCC-box (NF-responsive box) of ENOD11 promoter. Acts as a transcriptional activator of NF-responsive box-containing target gene promoters in root hairs. Functions as a transcriptional regulator required for root infection by symbiotic rhizobia, infection thread (IT) formation and maintenance, and nodule development. Necessary for NF-induced gene expression and spontaneous nodulation activated by CCAMK. Functions downstream of CCAMK to activate nodulation gene expression. Involved in early stages of root nodule development. Functions redundantly with ERN2. Is essential with ERN2 for the initiation of root hair infection, and nodule organogenesis and development. Required for accurate expression of the NF signaling genes ENOD11 and ENOD12. This chain is Ethylene-responsive transcription factor ERN1, found in Medicago truncatula (Barrel medic).